Consider the following 567-residue polypeptide: Alpha-glucosidase (567 aa).

The signal sequence occupies residues 1 to 17; sequence MKAVIVFCLMALSIVDA. N-linked (GlcNAc...) asparagine glycosylation is found at N88 and N123. D223 (nucleophile) is an active-site residue. The N-linked (GlcNAc...) asparagine glycan is linked to N247. E286 (proton donor) is an active-site residue. Residues N290, N313, N319, N499, and N507 are each glycosylated (N-linked (GlcNAc...) asparagine).

As to quaternary structure, monomer. As to expression, expressed specifically in the hypopharyngeal glands of worker bees. Also found in the brain of worker bees (at protein level).

The enzyme catalyses Hydrolysis of terminal, non-reducing (1-&gt;4)-linked alpha-D-glucose residues with release of alpha-D-glucose.. Its function is as follows. Converts sucrose in nectar to glucose and fructose. This chain is Alpha-glucosidase, found in Apis mellifera (Honeybee).